The sequence spans 214 residues: 3-isopropylmalate dehydratase small subunit (214 aa).

Belongs to the LeuD family. LeuD type 1 subfamily. Heterodimer of LeuC and LeuD.

It carries out the reaction (2R,3S)-3-isopropylmalate = (2S)-2-isopropylmalate. The protein operates within amino-acid biosynthesis; L-leucine biosynthesis; L-leucine from 3-methyl-2-oxobutanoate: step 2/4. In terms of biological role, catalyzes the isomerization between 2-isopropylmalate and 3-isopropylmalate, via the formation of 2-isopropylmaleate. The chain is 3-isopropylmalate dehydratase small subunit from Nitrosococcus oceani (strain ATCC 19707 / BCRC 17464 / JCM 30415 / NCIMB 11848 / C-107).